The following is a 250-amino-acid chain: Small ribosomal subunit protein uS2 (250 aa).

Positions 225-250 (GAQGGRQARGEDLGAAVEAPSEDALA) are disordered.

It belongs to the universal ribosomal protein uS2 family.

This chain is Small ribosomal subunit protein uS2, found in Rhizorhabdus wittichii (strain DSM 6014 / CCUG 31198 / JCM 15750 / NBRC 105917 / EY 4224 / RW1) (Sphingomonas wittichii).